Consider the following 418-residue polypeptide: Glutamyl-tRNA reductase (418 aa).

Substrate contacts are provided by residues 49-52, serine 107, 112-114, and glutamine 118; these read TCNR and EPQ. Cysteine 50 functions as the Nucleophile in the catalytic mechanism. Residue 187–192 participates in NADP(+) binding; it reads GAGETI.

Belongs to the glutamyl-tRNA reductase family. Homodimer.

The catalysed reaction is (S)-4-amino-5-oxopentanoate + tRNA(Glu) + NADP(+) = L-glutamyl-tRNA(Glu) + NADPH + H(+). It functions in the pathway porphyrin-containing compound metabolism; protoporphyrin-IX biosynthesis; 5-aminolevulinate from L-glutamyl-tRNA(Glu): step 1/2. Its function is as follows. Catalyzes the NADPH-dependent reduction of glutamyl-tRNA(Glu) to glutamate 1-semialdehyde (GSA). This Pseudoalteromonas translucida (strain TAC 125) protein is Glutamyl-tRNA reductase.